The chain runs to 164 residues: Phospholipase A and acyltransferase 4 (164 aa).

An essential for its ability regulate keratinocyte differentiation region spans residues 1 to 40 (MASPHQEPKPGDLIEIFRLGYEHWALYIGDGYVIHLAPPS). The Cytoplasmic segment spans residues 1–134 (MASPHQEPKP…SRCKQVEKAK (134 aa)). The region spanning 13-129 (LIEIFRLGYE…LRYGKSRCKQ (117 aa)) is the LRAT domain. Active-site residues include His-23 and His-35. Cys-113 functions as the Acyl-thioester intermediate in the catalytic mechanism. Positions 124-164 (KSRCKQVEKAKVEVGVATALGILVVAGCSFAIRRYQKKATA) are interaction with TGM1. Residues 135 to 155 (VEVGVATALGILVVAGCSFAI) form a helical membrane-spanning segment. The Lumenal portion of the chain corresponds to 156–164 (RRYQKKATA).

Belongs to the H-rev107 family. As to quaternary structure, interacts with TGM1. Widely expressed.

It is found in the membrane. It carries out the reaction a 1,2-diacyl-sn-glycero-3-phosphocholine + H2O = a 1-acyl-sn-glycero-3-phosphocholine + a fatty acid + H(+). It catalyses the reaction a 1,2-diacyl-sn-glycero-3-phosphocholine + H2O = a 2-acyl-sn-glycero-3-phosphocholine + a fatty acid + H(+). The enzyme catalyses 1,2-dihexadecanoyl-sn-glycero-3-phosphocholine + H2O = 1-hexadecanoyl-sn-glycero-3-phosphocholine + hexadecanoate + H(+). The catalysed reaction is 1,2-dihexadecanoyl-sn-glycero-3-phosphocholine + H2O = 2-hexadecanoyl-sn-glycero-3-phosphocholine + hexadecanoate + H(+). It carries out the reaction 1-hexadecanoyl-2-(9Z-octadecenoyl)-sn-glycero-3-phosphocholine + H2O = 2-(9Z-octadecenoyl)-sn-glycero-3-phosphocholine + hexadecanoate + H(+). It catalyses the reaction 1-hexadecanoyl-2-(9Z-octadecenoyl)-sn-glycero-3-phosphocholine + H2O = 1-hexadecanoyl-sn-glycero-3-phosphocholine + (9Z)-octadecenoate + H(+). The enzyme catalyses 1-hexadecanoyl-2-(5Z,8Z,11Z,14Z-eicosatetraenoyl)-sn-glycero-3-phosphocholine + H2O = 2-(5Z,8Z,11Z,14Z)-eicosatetraenoyl-sn-glycero-3-phosphocholine + hexadecanoate + H(+). The catalysed reaction is 1-hexadecanoyl-2-(9Z,12Z-octadecadienoyl)-sn-glycero-3-phosphoethanolamine + H2O = 1-hexadecanoyl-sn-glycero-3-phosphoethanolamine + (9Z,12Z)-octadecadienoate + H(+). It carries out the reaction 1-hexadecanoyl-2-(9Z,12Z-octadecadienoyl)-sn-glycero-3-phosphoethanolamine + H2O = 2-(9Z,12Z)-octadecadienoyl-sn-glycero-3-phosphoethanolamine + hexadecanoate + H(+). It catalyses the reaction 1-hexadecanoyl-2-(5Z,8Z,11Z,14Z-eicosatetraenoyl)-sn-glycero-3-phosphoethanolamine + H2O = 2-(5Z,8Z,11Z,14Z)-eicosatetraenoyl-sn-glycero-3-phosphoethanolamine + hexadecanoate + H(+). The enzyme catalyses 1-hexanoyl-2-acyl-sn-glycero-3-phosphocholine + H2O = hexanoate + a 2-acyl-sn-glycero-3-phosphocholine + H(+). The catalysed reaction is 1,2-diheptadecanoyl-sn-glycero-3-phosphoethanolamine + 1-(9Z-octadecenoyl)-2-hexadecanoyl-sn-glycero-3-phosphocholine = 1,2-diheptadecanoyl-sn-glycero-3-phospho-N-hexadecanoyl-ethanolamine + 1-(9Z-octadecenoyl)-sn-glycero-3-phosphocholine + H(+). It carries out the reaction 1,2-diheptadecanoyl-sn-glycero-3-phosphoethanolamine + 1-(9Z-octadecenoyl)-2-hexadecanoyl-sn-glycero-3-phosphocholine = 1,2-diheptadecanoyl-sn-glycero-3-phospho-N-(9Z-octadecenoyl)-ethanolamine + 2-hexadecanoyl-sn-glycero-3-phosphocholine + H(+). Its function is as follows. Exhibits both phospholipase A1/2 and acyltransferase activities. Shows phospholipase A1 (PLA1) and A2 (PLA2), catalyzing the calcium-independent release of fatty acids from the sn-1 or sn-2 position of glycerophospholipids. For most substrates, PLA1 activity is much higher than PLA2 activity. Shows O-acyltransferase activity, catalyzing the transfer of a fatty acyl group from glycerophospholipid to the hydroxyl group of lysophospholipid. Shows N-acyltransferase activity, catalyzing the calcium-independent transfer of a fatty acyl group at the sn-1 position of phosphatidylcholine (PC) and other glycerophospholipids to the primary amine of phosphatidylethanolamine (PE), forming N-acylphosphatidylethanolamine (NAPE), which serves as precursor for N-acylethanolamines (NAEs). Promotes keratinocyte differentiation via activation of TGM1. The chain is Phospholipase A and acyltransferase 4 from Homo sapiens (Human).